Here is a 612-residue protein sequence, read N- to C-terminus: Protein NorD (612 aa).

The tract at residues 220 to 246 (EGEGDLETPPSGQSRQRNGARRVDDSS) is disordered. Positions 420–609 (DLACLLLADL…FPPAAAVQAT (190 aa)) constitute a VWFA domain.

Functionally, component of the anaerobic respiratory chain that transforms nitrate to dinitrogen (denitrification). This Stutzerimonas stutzeri (Pseudomonas stutzeri) protein is Protein NorD (norD).